The primary structure comprises 235 residues: Phosphoribosylaminoimidazole-succinocarboxamide synthase (235 aa).

The protein belongs to the SAICAR synthetase family.

The catalysed reaction is 5-amino-1-(5-phospho-D-ribosyl)imidazole-4-carboxylate + L-aspartate + ATP = (2S)-2-[5-amino-1-(5-phospho-beta-D-ribosyl)imidazole-4-carboxamido]succinate + ADP + phosphate + 2 H(+). It functions in the pathway purine metabolism; IMP biosynthesis via de novo pathway; 5-amino-1-(5-phospho-D-ribosyl)imidazole-4-carboxamide from 5-amino-1-(5-phospho-D-ribosyl)imidazole-4-carboxylate: step 1/2. This is Phosphoribosylaminoimidazole-succinocarboxamide synthase from Clostridium acetobutylicum (strain ATCC 824 / DSM 792 / JCM 1419 / IAM 19013 / LMG 5710 / NBRC 13948 / NRRL B-527 / VKM B-1787 / 2291 / W).